The following is a 161-amino-acid chain: Cytochrome b6-f complex subunit 4 (161 aa).

Transmembrane regions (helical) follow at residues 37-57 (LLYI…GLAV), 96-116 (LLGV…PFIE), and 132-152 (SVFL…TLPI).

Belongs to the cytochrome b family. PetD subfamily. As to quaternary structure, the 4 large subunits of the cytochrome b6-f complex are cytochrome b6, subunit IV (17 kDa polypeptide, PetD), cytochrome f and the Rieske protein, while the 4 small subunits are PetG, PetL, PetM and PetN. The complex functions as a dimer.

The protein resides in the cellular thylakoid membrane. In terms of biological role, component of the cytochrome b6-f complex, which mediates electron transfer between photosystem II (PSII) and photosystem I (PSI), cyclic electron flow around PSI, and state transitions. In Acaryochloris marina (strain MBIC 11017), this protein is Cytochrome b6-f complex subunit 4.